The primary structure comprises 144 residues: Large ribosomal subunit protein uL11 (144 aa).

The protein belongs to the universal ribosomal protein uL11 family. As to quaternary structure, part of the ribosomal stalk of the 50S ribosomal subunit. Interacts with L10 and the large rRNA to form the base of the stalk. L10 forms an elongated spine to which L12 dimers bind in a sequential fashion forming a multimeric L10(L12)X complex. In terms of processing, one or more lysine residues are methylated.

Its function is as follows. Forms part of the ribosomal stalk which helps the ribosome interact with GTP-bound translation factors. This chain is Large ribosomal subunit protein uL11, found in Corynebacterium efficiens (strain DSM 44549 / YS-314 / AJ 12310 / JCM 11189 / NBRC 100395).